The following is a 390-amino-acid chain: Protein snail (390 aa).

Positions 1 to 20 (MAANYKSCPLKKRPIVFVEE) are SNAG domain. 2 disordered regions span residues 29-65 (ALTK…PKRD) and 162-191 (QSVY…DLSV). Polar residues-rich tracts occupy residues 32-43 (KDSQFAQDQPQD) and 162-172 (QSVYSYQQMTP). C2H2-type zinc fingers lie at residues 245–267 (FKCD…RQFH), 280–302 (HSCE…IRTH), 306–328 (CKCP…IRTH), 334–356 (FQCP…QQTH), and 362–385 (YACQ…SSNC).

The protein belongs to the snail C2H2-type zinc-finger protein family.

The protein localises to the nucleus. In terms of biological role, essential for the correct specification of ventral-dorsal patterns. This is Protein snail (sna) from Drosophila melanogaster (Fruit fly).